We begin with the raw amino-acid sequence, 776 residues long: Probable inorganic carbon transporter subunit DabA (776 aa).

Residues Cys-313, Asp-315, His-473, and Cys-488 each contribute to the Zn(2+) site.

Belongs to the inorganic carbon transporter (TC 9.A.2) DabA family. As to quaternary structure, forms a complex with DabB. Zn(2+) is required as a cofactor.

The protein resides in the cell inner membrane. Part of an energy-coupled inorganic carbon pump. This chain is Probable inorganic carbon transporter subunit DabA, found in Chromobacterium violaceum (strain ATCC 12472 / DSM 30191 / JCM 1249 / CCUG 213 / NBRC 12614 / NCIMB 9131 / NCTC 9757 / MK).